The sequence spans 371 residues: Lombricine kinase (371 aa).

The Phosphagen kinase N-terminal domain occupies Met1–Gly86. One can recognise a Phosphagen kinase C-terminal domain in the interval Tyr113 to Leu355. ATP contacts are provided by residues Ser116 to Arg120, His179, Arg224, Arg280, Arg308 to Glu313, and Asp323.

This sequence belongs to the ATP:guanido phosphotransferase family. Homodimer.

The catalysed reaction is L-lombricine + ATP = N-phospho-L-lombricine + ADP + H(+). This chain is Lombricine kinase, found in Eisenia fetida (Red wiggler worm).